The following is a 274-amino-acid chain: Envelope glycoprotein L (274 aa).

Positions 1 to 21 are cleaved as a signal peptide; that stretch reads MMPLLLLILLSTRNLLGAAQS. The region spanning 51–251 is the gL betaherpesvirus-type domain; the sequence is VEHKCREALA…RSYRDRFPAV (201 aa). A disulfide bridge connects residues Cys156 and Cys161.

This sequence belongs to the herpesviridae glycoprotein L (gL) family. Betaherpesvirinae gL subfamily. In terms of assembly, interacts with glycoprotein H (gH); this interaction is necessary for the correct processing and cell surface expression of gH.

The protein localises to the virion membrane. It localises to the host cell membrane. The protein resides in the host Golgi apparatus. Its subcellular location is the host trans-Golgi network. The heterodimer glycoprotein H-glycoprotein L is required for the fusion of viral and plasma membranes leading to virus entry into the host cell. Acts as a functional inhibitor of gH and maintains gH in an inhibited form. Upon binding to host integrins, gL dissociates from gH leading to activation of the viral fusion glycoproteins gB and gH. The chain is Envelope glycoprotein L from Murid herpesvirus 1 (strain Smith) (MuHV-1).